The chain runs to 222 residues: Salivary anticoagulant protein P23 (222 aa).

Positions 1 to 17 (MLTVSLLTLSLAAYASA) are cleaved as a signal peptide. N56, N73, N109, and N114 each carry an N-linked (GlcNAc...) asparagine glycan.

As to expression, salivary gland (at protein level). Adult midgut.

The protein resides in the secreted. Inhibits host coagulation by delaying thrombin generation and reducing endogenous thrombin potential (ETP). The chain is Salivary anticoagulant protein P23 from Ixodes scapularis (Black-legged tick).